Reading from the N-terminus, the 52-residue chain is Defensin D2 (52 aa).

4 disulfides stabilise this stretch: Cys-8–Cys-52, Cys-19–Cys-39, Cys-25–Cys-46, and Cys-29–Cys-48.

In terms of tissue distribution, distributed in the epidermal cell layer of leaves and in the subepidermal layer region of stems. Not in roots.

It is found in the secreted. Its subcellular location is the cell wall. Its function is as follows. Antimicrobial peptide. Active against Fusarium spp., Gram-positive and Gram-negative bacterial pathogens. This chain is Defensin D2, found in Spinacia oleracea (Spinach).